The following is a 129-amino-acid chain: Small ribosomal subunit protein uS8 (129 aa).

This sequence belongs to the universal ribosomal protein uS8 family. As to quaternary structure, part of the 30S ribosomal subunit. Contacts proteins S5 and S12.

One of the primary rRNA binding proteins, it binds directly to 16S rRNA central domain where it helps coordinate assembly of the platform of the 30S subunit. This Bdellovibrio bacteriovorus (strain ATCC 15356 / DSM 50701 / NCIMB 9529 / HD100) protein is Small ribosomal subunit protein uS8.